Consider the following 81-residue polypeptide: Putative defensin-like protein 31 (81 aa).

Residues 1–26 (MTSSSKCLFFVFLCLAALLTPYLAEA) form the signal peptide. Disulfide bonds link C38/C58, C44/C70, and C48/C72.

Belongs to the DEFL family.

Its subcellular location is the secreted. This Arabidopsis thaliana (Mouse-ear cress) protein is Putative defensin-like protein 31.